We begin with the raw amino-acid sequence, 203 residues long: Auxin-induced protein 22E (203 aa).

Residues 15–19 (LRLGL) carry the EAR-like (transcriptional repression) motif. The segment at 15 to 77 (LRLGLPGSDE…DHNEDSVQPA (63 aa)) is disordered. Basic and acidic residues predominate over residues 43–52 (SSPELEESRC). The segment covering 58-67 (SDSSDSTTTS) has biased composition (low complexity). Residues 107-199 (GMYLKVSMAG…RIIKGSEAKG (93 aa)) form the PB1 domain.

The protein belongs to the Aux/IAA family. Homodimers and heterodimers.

The protein localises to the nucleus. Aux/IAA proteins are short-lived transcriptional factors that function as repressors of early auxin response genes at low auxin concentrations. Repression is thought to result from the interaction with auxin response factors (ARFs), proteins that bind to the auxin-responsive promoter element (AuxRE). Formation of heterodimers with ARF proteins may alter their ability to modulate early auxin response genes expression. This Vigna radiata var. radiata (Mung bean) protein is Auxin-induced protein 22E (AUX22E).